The following is a 508-amino-acid chain: Lysine--tRNA ligase (508 aa).

Residues glutamate 416 and glutamate 423 each contribute to the Mg(2+) site.

This sequence belongs to the class-II aminoacyl-tRNA synthetase family. As to quaternary structure, homodimer. It depends on Mg(2+) as a cofactor.

It is found in the cytoplasm. It catalyses the reaction tRNA(Lys) + L-lysine + ATP = L-lysyl-tRNA(Lys) + AMP + diphosphate. The sequence is that of Lysine--tRNA ligase from Prochlorococcus marinus (strain MIT 9313).